The primary structure comprises 68 residues: DNA-directed RNA polymerase subunit omega (68 aa).

Belongs to the RNA polymerase subunit omega family. The RNAP catalytic core consists of 2 alpha, 1 beta, 1 beta' and 1 omega subunit. When a sigma factor is associated with the core the holoenzyme is formed, which can initiate transcription.

The enzyme catalyses RNA(n) + a ribonucleoside 5'-triphosphate = RNA(n+1) + diphosphate. In terms of biological role, promotes RNA polymerase assembly. Latches the N- and C-terminal regions of the beta' subunit thereby facilitating its interaction with the beta and alpha subunits. This is DNA-directed RNA polymerase subunit omega from Alkaliphilus metalliredigens (strain QYMF).